The chain runs to 621 residues: Interleukin-1 receptor-associated kinase-like 2 (621 aa).

In terms of domain architecture, Death spans 13-94 (LDDLCRNMDT…RAAQIILNWK (82 aa)). Positions 113 to 175 (GKPLAASVRN…TASADSKDFS (63 aa)) are disordered. Over residues 157–169 (ASSSLKTNQTASA) the composition is skewed to polar residues. In terms of domain architecture, Protein kinase spans 206–476 (FNPSHKISEG…AEALVMAACL (271 aa)). Residues 212–220 (ISEGTFADV), Lys-233, and 333–336 (KSSN) contribute to the ATP site. Positions 503-522 (ETSLPCSGLSEGTGSSFNTP) are enriched in polar residues. The disordered stretch occupies residues 503 to 534 (ETSLPCSGLSEGTGSSFNTPEETDDVDNSSFD).

Belongs to the protein kinase superfamily. TKL Ser/Thr protein kinase family. Pelle subfamily. In terms of assembly, interacts with MYD88. IL-1 stimulation leads to the formation of a signaling complex which dissociates from the IL-1 receptor following the binding of PELI1.

In terms of biological role, binds to the IL-1 type I receptor following IL-1 engagement, triggering intracellular signaling cascades leading to transcriptional up-regulation and mRNA stabilization. The chain is Interleukin-1 receptor-associated kinase-like 2 (IRAK2) from Bos taurus (Bovine).